We begin with the raw amino-acid sequence, 383 residues long: Acetylornithine deacetylase (383 aa).

Zn(2+) is bound at residue H80. The active site involves D82. D112 is a binding site for Zn(2+). E144 is an active-site residue. 3 residues coordinate Zn(2+): E145, E169, and H355.

The protein belongs to the peptidase M20A family. ArgE subfamily. As to quaternary structure, homodimer. Requires Zn(2+) as cofactor. The cofactor is Co(2+). Glutathione is required as a cofactor.

The protein localises to the cytoplasm. It catalyses the reaction N(2)-acetyl-L-ornithine + H2O = L-ornithine + acetate. It participates in amino-acid biosynthesis; L-arginine biosynthesis; L-ornithine from N(2)-acetyl-L-ornithine (linear): step 1/1. Catalyzes the hydrolysis of the amide bond of N(2)-acetylated L-amino acids. Cleaves the acetyl group from N-acetyl-L-ornithine to form L-ornithine, an intermediate in L-arginine biosynthesis pathway, and a branchpoint in the synthesis of polyamines. The sequence is that of Acetylornithine deacetylase from Escherichia coli O17:K52:H18 (strain UMN026 / ExPEC).